Here is a 295-residue protein sequence, read N- to C-terminus: UDP-3-O-acyl-N-acetylglucosamine deacetylase (295 aa).

Histidine 77, histidine 233, and aspartate 237 together coordinate Zn(2+). Residue histidine 260 is the Proton donor of the active site.

This sequence belongs to the LpxC family. Requires Zn(2+) as cofactor.

It catalyses the reaction a UDP-3-O-[(3R)-3-hydroxyacyl]-N-acetyl-alpha-D-glucosamine + H2O = a UDP-3-O-[(3R)-3-hydroxyacyl]-alpha-D-glucosamine + acetate. It participates in glycolipid biosynthesis; lipid IV(A) biosynthesis; lipid IV(A) from (3R)-3-hydroxytetradecanoyl-[acyl-carrier-protein] and UDP-N-acetyl-alpha-D-glucosamine: step 2/6. Catalyzes the hydrolysis of UDP-3-O-myristoyl-N-acetylglucosamine to form UDP-3-O-myristoylglucosamine and acetate, the committed step in lipid A biosynthesis. In Solibacter usitatus (strain Ellin6076), this protein is UDP-3-O-acyl-N-acetylglucosamine deacetylase.